The following is a 129-amino-acid chain: Small ribosomal subunit protein uS9 (129 aa).

The disordered stretch occupies residues 98-129; it reads KAQGFLTRDPRKKERKKYGRKKARKSFQFSKR. Residues 110–129 show a composition bias toward basic residues; the sequence is KERKKYGRKKARKSFQFSKR.

This sequence belongs to the universal ribosomal protein uS9 family.

This Chlamydia trachomatis serovar L2 (strain ATCC VR-902B / DSM 19102 / 434/Bu) protein is Small ribosomal subunit protein uS9.